The primary structure comprises 453 residues: Ribosomal protein uS12 methylthiotransferase RimO (453 aa).

In terms of domain architecture, MTTase N-terminal spans 5-120 (PKVGFVSLGC…VMQAVHSHLP (116 aa)). Residues C14, C50, C79, C151, C155, and C158 each coordinate [4Fe-4S] cluster. The Radical SAM core domain maps to 137–383 (LTPRHYAYLK…EVAEEVSAHR (247 aa)). A TRAM domain is found at 385 to 453 (QRKVGKTLKV…ADGHDLWGEV (69 aa)).

The protein belongs to the methylthiotransferase family. RimO subfamily. [4Fe-4S] cluster serves as cofactor.

It localises to the cytoplasm. The catalysed reaction is L-aspartate(89)-[ribosomal protein uS12]-hydrogen + (sulfur carrier)-SH + AH2 + 2 S-adenosyl-L-methionine = 3-methylsulfanyl-L-aspartate(89)-[ribosomal protein uS12]-hydrogen + (sulfur carrier)-H + 5'-deoxyadenosine + L-methionine + A + S-adenosyl-L-homocysteine + 2 H(+). In terms of biological role, catalyzes the methylthiolation of an aspartic acid residue of ribosomal protein uS12. The sequence is that of Ribosomal protein uS12 methylthiotransferase RimO from Burkholderia cenocepacia (strain ATCC BAA-245 / DSM 16553 / LMG 16656 / NCTC 13227 / J2315 / CF5610) (Burkholderia cepacia (strain J2315)).